The following is a 1841-amino-acid chain: MRNSSKGQDPNFSYDSILSTPTPSARRTIGPRAPKSKTTYHKPPSSIESVSTLIQPNKSQSVTSPYVKQFTFSSKEYNSHNKHALQNSQLPLPKTPEKSTVHRPKANKVEVTDLPSSSSVEHLHTSKHLKGPRLPKNIIKSSEDVQIAPVTPPVHSRSFDPLPKPPVPSVPVSKTKRRTKHKLAPVVEVPEITNEVSPKFTSTNDEQVYRLRSIRAGSPNSVCSFQFEIPSTRPPSLDQLIHLFNDFLRHPVFDFDENAIEMLQSCTPDEKWCFIRSNFAGFDDPSFQIPELAAVHRPVSWFVIQLWNKTISNLQLITLSSLLSTQSDRWISLFLELQGLRALHNLLTYFNSSAVVQPQQAEVPRCMLTLLKKKPTLVTSNSYIFQAITVTLISPNLLPRKVAADLLTWVLSLKEPLVVSILETGFKEINAEYEKEVPLFFGWIKSFKDIILEKELARTPPSSPARNSASSSPSNIAFLEYCTSTMEFINQLIVACEELEQGFDLDILDSLRESGIHEVIQLLRNFPDQQLEKQLNIYESEEERRTISQTTHEDVDSFMSNESSILSSFNEFASNEVGRLLESTIQNILLAKGTEKQKVKLIKVFNSLLQRILLNSKVSNESFEDSLQASLNMLTERFYSDDTARNALKEAKASRAMAEKMVIERDAMAAQVNLGAEDLIAKLNKEVEDQKDVILSQKRTNETLKTEIDALQKSHVTQIQRSEVELRELYLLINSDSFQGSTNSKERIIEYLLDKLDLRKKEIAAESTLWSNDGIDDKLRDLREQMSRQSSQPSTVSTILQIPDKKFHRPFPRHLHRYVGRSASESLTSEKDESIKSMKGIDDFANLEIPGKGIESNVVIKDISNQTHEINSVENKAETVSNNSKITNFDIPNDATSLPTIITHPTPPPPPPLPVKTSLNTFSHPDSVNIVANDTSVAGVMPAFPPPPPPPPPLVSAAGGKFVSPAVSNNISKDDLHKTTGLTRRPTRRLKQMHWEKLNSGLEFTFWTGPSDEANKILETLHTSGVLDELDESFAMKEAKTLVKKTCARTDYMSSELQKLFGIHFHKLSHKNPNEIIRMILHCDDSMNECVEFLSSDKVLNQPKLKADLEPYRIDWANGGDLVNSEKDASELSRWDYLYVRLIVDLGGYWNQRMNALKVKNIIETNYENLVRQTKLIGRAALELRDSKVFKGLLYLILYLGNYMNDYVRQAKGFAIGSLQRLPLIKNANNTKSLLHILDITIRKHFPQFDNFSPELSTVTEAAKLNIEAIEQECSELIRGCQNLQIDCDSGALSDPTVFHPDDKILSVILPWLMEGTKKMDFLKEHLRTMNTTLNNAMRYFGEQPNDPNSKNLFFKRVDSFIIDYSKARSDNLKSEEEEASQHRRLNLVNNHKEHVLERAMSENNKMDNEAMDGFLDKLRNVKLESHHKPRNRSAITMGKEHLIEAPNTSTKSSPAKNELFVPKRSSVKSDLAKVRPRYPKGSESTDGLSDALNITPTKKGEVSSKAKKGYNYEKRRSGRQVSDSYVLNKNSKNKSNKGRSASYTFSDPSSLEDSNRQKPFNGEKFRRFSSKSRRGSQNRDSKKTGKARKDKGINNNQTSPQNKPSKESLKSDTISNEKKVFPQKASKVNLLTPTISNGTRASKHANEKENTFPRGVENNLVAPMIPNNTELNEDTSAVSRNLENATNDLKETFPTTTTISTARAKPGNNDINTILRRNNSRGRRRMLQQMSPLKSNKFSGTNDLNFQQATKPDGSNKSSYMERLEKLKQNSERHLQSVGGKKVYSSEETPVNKILVSPSVSILDHNRILSQSTPIKSPQRAQEMLAGLLSGKLAPKENEK.

2 stretches are compositionally biased toward polar residues: residues 1–25 (MRNS…TPSA) and 46–63 (SIES…QSVT). Disordered regions lie at residues 1–63 (MRNS…QSVT), 78–134 (NSHN…GPRL), and 152–181 (PPVH…RTKH). The GBD/FH3 domain occupies 232–620 (TRPPSLDQLI…RILLNSKVSN (389 aa)). Residues 674-715 (LGAEDLIAKLNKEVEDQKDVILSQKRTNETLKTEIDALQKSH) are a coiled coil. The FH1 domain maps to 740 to 972 (GSTNSKERII…VSPAVSNNIS (233 aa)). Residues 980–1391 (TGLTRRPTRR…QHRRLNLVNN (412 aa)) enclose the FH2 domain. Residues 1260–1290 (TEAAKLNIEAIEQECSELIRGCQNLQIDCDS) are a coiled coil. Disordered regions lie at residues 1445-1661 (EAPN…ENNL), 1696-1715 (TTTT…INTI), and 1735-1758 (KSNK…GSNK). Polar residues-rich tracts occupy residues 1447–1456 (PNTSTKSSPA) and 1483–1497 (SEST…NITP). Over residues 1499–1516 (KKGEVSSKAKKGYNYEKR) the composition is skewed to basic and acidic residues. The segment covering 1539–1553 (GRSASYTFSDPSSLE) has biased composition (polar residues). Ser-1541 is subject to Phosphoserine. Tyr-1544 bears the Phosphotyrosine mark. Positions 1554–1567 (DSNRQKPFNGEKFR) are enriched in basic and acidic residues. Residues 1568 to 1577 (RFSSKSRRGS) are compositionally biased toward basic residues. A compositionally biased stretch (polar residues) spans 1594–1604 (INNNQTSPQNK). Positions 1605 to 1621 (PSKESLKSDTISNEKKV) are enriched in basic and acidic residues. Residues 1630-1641 (NLLTPTISNGTR) show a composition bias toward polar residues.

Belongs to the formin homology family. BNI1 subfamily. As to quaternary structure, interacts with profilin and actin at the FH1 and FH2 domains respectively.

It is found in the nucleus. Plays a role in the cell cycle. Involved in cytokinesis. Component of the cell division ring. In the absence of profilin, caps the barbed end of actin filaments, thus preventing subunit addition and dissociation. In the presence of profilin, nucleates actin filaments that grow rapidly from their barbed ends. This is Cell division control protein 12 (cdc12) from Schizosaccharomyces pombe (strain 972 / ATCC 24843) (Fission yeast).